We begin with the raw amino-acid sequence, 641 residues long: Protein zwilch (641 aa).

Phosphoserine is present on Ser312.

The protein belongs to the ZWILCH family. Component of the RZZ complex composed of rod, Zw10 and Zwilch.

Its subcellular location is the cytoplasm. It is found in the chromosome. The protein localises to the centromere. The protein resides in the kinetochore. It localises to the cytoskeleton. Its subcellular location is the spindle. In terms of biological role, essential component of the mitotic checkpoint, which prevents cells from prematurely exiting mitosis. Required for the assembly of the dynein-dynactin, Mad2 complexes and spindly/CG15415 onto kinetochores. Its function related to the spindle assembly machinery is proposed to depend on its association in the RZZ complex. Failure to assemble the complex due to the absence of any one of its components, results in the incorrect redistribution of the remaining components to diverse membrane compartments. The protein is Protein zwilch of Drosophila melanogaster (Fruit fly).